The chain runs to 269 residues: MERSQSRLSLSASFEALAIYFPCMNSFDDEDAADSRRLKGAIQRSTETGLAVEMPSRTLRQASHESIEDSMNSYGSEGNLNYGGVCLASDAQFSDFLGSMGPAQFVGRQTLATTPMGDVEIGLQERNGQLEVDIIQARGLTAKPGSKTLPAAYIKAYLLENGVCIAKKKTKVARKSLDPLYNQVLLFPESPQGKVLQVIVWGNYGRMERKQFMGVARVLLEELDLTTLAVGWYKLFPTSSMVDPATGPLLRQASQLSLESTVGPCGERS.

The C2 domain occupies 115–233; the sequence is PMGDVEIGLQ…DLTTLAVGWY (119 aa). Phosphoserine is present on residues S254 and S257.

In terms of assembly, binds PPFIA3. Does not bind RAB3.

It localises to the synapse. Its function is as follows. Regulates synaptic membrane exocytosis. The chain is Regulating synaptic membrane exocytosis protein 4 (Rims4) from Mus musculus (Mouse).